The chain runs to 358 residues: Photosystem II protein D1 (358 aa).

3 helical membrane passes run 28-45 (YVGWFGVLMVPTLLAAAI), 117-132 (HFLIGICCWLGRQWEL), and 141-155 (WICVAYSAPLSAAFA). His-117 provides a ligand contact to chlorophyll a. Trp-125 provides a ligand contact to pheophytin a. Asp-169 and Glu-188 together coordinate [CaMn4O5] cluster. The chain crosses the membrane as a helical span at residues 196–217 (FHMIGVAGMFGGSLFSAMHGSL). Position 197 (His-197) interacts with chlorophyll a. Residues His-214 and 263-264 (SF) each bind a quinone. Residue His-214 coordinates Fe cation. His-271 is a Fe cation binding site. Residues 273–287 (FLAAWPVICIWITSL) traverse the membrane as a helical segment. [CaMn4O5] cluster is bound by residues His-331, Glu-332, Asp-341, and Ala-343. Positions 344 to 358 (AAESTPVALIAPAIG) are excised as a propeptide.

This sequence belongs to the reaction center PufL/M/PsbA/D family. PSII is composed of 1 copy each of membrane proteins PsbA, PsbB, PsbC, PsbD, PsbE, PsbF, PsbH, PsbI, PsbJ, PsbK, PsbL, PsbM, PsbT, PsbX, PsbY, Psb30/Ycf12, peripheral proteins PsbO, CyanoQ (PsbQ), PsbU, PsbV and a large number of cofactors. It forms dimeric complexes. The D1/D2 heterodimer binds P680, chlorophylls that are the primary electron donor of PSII, and subsequent electron acceptors. It shares a non-heme iron and each subunit binds pheophytin, quinone, additional chlorophylls, carotenoids and lipids. D1 provides most of the ligands for the Mn4-Ca-O5 cluster of the oxygen-evolving complex (OEC). There is also a Cl(-1) ion associated with D1 and D2, which is required for oxygen evolution. The PSII complex binds additional chlorophylls, carotenoids and specific lipids. serves as cofactor. Tyr-160 forms a radical intermediate that is referred to as redox-active TyrZ, YZ or Y-Z. Post-translationally, C-terminally processed by CtpA; processing is essential to allow assembly of the oxygen-evolving complex and thus photosynthetic growth.

It is found in the cellular thylakoid membrane. It carries out the reaction 2 a plastoquinone + 4 hnu + 2 H2O = 2 a plastoquinol + O2. Photosystem II (PSII) is a light-driven water:plastoquinone oxidoreductase that uses light energy to abstract electrons from H(2)O, generating O(2) and a proton gradient subsequently used for ATP formation. It consists of a core antenna complex that captures photons, and an electron transfer chain that converts photonic excitation into a charge separation. The D1/D2 (PsbA/PsbD) reaction center heterodimer binds P680, the primary electron donor of PSII as well as several subsequent electron acceptors. This is Photosystem II protein D1 from Prochlorococcus marinus (strain MIT 9303).